A 376-amino-acid polypeptide reads, in one-letter code: MEYEHLWLTAYGCLAVVGAVVVYCAIKQSLVTNWWFYGSIYPQVKLMADRTTFKPFEYPGCYDKWDTHEHAHWSFKELNMQDDVHDWHNRLSEAEKTFLVQILRFFTQGDVDVAVGYVQYLQLFQQPEVRMMLFSFGAREAMHIASYSHLISTLNLPDVTYQEFLKYKAMKDKHEFVFNSRFKSTTVGRFFNYLLFGYDTHLEEIAVKIALFSAFIEGVQLFSSFIMLLNFTRHGLMKKMGQIIQWSIADETHHTNSMMELFSTLVVENKSHIRLGVLEARVRDTARKIVQLEDGFIDLAFSMGEMRQLTADDVKSYIRYITNRRLQTMGYLPLYSVVENPLPWVEDLLNAPSHTNFFENKPTEYAKASLTGDWPW.

3 residues coordinate Fe cation: aspartate 110, glutamate 140, and histidine 143. The active site involves tyrosine 147. Fe cation-binding residues include glutamate 217, glutamate 251, and histidine 254.

Belongs to the ribonucleoside diphosphate reductase small chain family. As to quaternary structure, heterotetramer composed of a homodimer of the large subunit (R1) and a homodimer of the small subunit (R2). Larger multisubunit protein complex are also active, composed of (R1)n(R2)n. Fe cation is required as a cofactor.

It carries out the reaction a 2'-deoxyribonucleoside 5'-diphosphate + [thioredoxin]-disulfide + H2O = a ribonucleoside 5'-diphosphate + [thioredoxin]-dithiol. In terms of biological role, ribonucleoside-diphosphate reductase holoenzyme provides the precursors necessary for viral DNA synthesis. Allows virus growth in non-dividing cells. Catalyzes the biosynthesis of deoxyribonucleotides from the corresponding ribonucleotides. The chain is Probable ribonucleoside-diphosphate reductase small subunit 048L from Invertebrate iridescent virus 3 (IIV-3).